The primary structure comprises 156 residues: SPbeta prophage-derived uncharacterized protein YorH (156 aa).

The protein is SPbeta prophage-derived uncharacterized protein YorH (yorH) of Bacillus subtilis (strain 168).